The sequence spans 43 residues: CLAVATA3/ESR (CLE)-related protein 16D10 (43 aa).

A signal peptide spans 1-30; the sequence is MFTNSIKNLIIYLMPLMVTLMLLSVSFVDA. A CLE motif is present at residues 31–43; sequence GKKPSGPNPGGNN.

Belongs to the CLV3/ESR signal peptide family. Highly expressed exclusively within the subventral esophageal gland cell during syncytium formation in host plants.

Its subcellular location is the secreted. The protein localises to the host cytoplasm. It localises to the host extracellular space. Functionally, plays a role in the differentiation or division of feeding cells (syncytia) induced in plant roots during infection. Promotes host root growth. This Meloidogyne arenaria (Peanut root-knot nematode) protein is CLAVATA3/ESR (CLE)-related protein 16D10 (16D10).